The sequence spans 168 residues: Lipoprotein signal peptidase (168 aa).

The next 3 membrane-spanning stretches (helical) occupy residues 6–26 (VLAALKWYGVALLVILLDQIT), 70–90 (WFLALLAAGVSVLLIFWIAKL), and 98–118 (ALALALVLGGALGNLYDRMLL). Active-site residues include Asp-123 and Asp-141. A helical transmembrane segment spans residues 139–159 (IADSAICIGAALLVWDSLFGT).

Belongs to the peptidase A8 family.

It localises to the cell inner membrane. The enzyme catalyses Release of signal peptides from bacterial membrane prolipoproteins. Hydrolyzes -Xaa-Yaa-Zaa-|-(S,diacylglyceryl)Cys-, in which Xaa is hydrophobic (preferably Leu), and Yaa (Ala or Ser) and Zaa (Gly or Ala) have small, neutral side chains.. Its pathway is protein modification; lipoprotein biosynthesis (signal peptide cleavage). This protein specifically catalyzes the removal of signal peptides from prolipoproteins. The protein is Lipoprotein signal peptidase of Teredinibacter turnerae (strain ATCC 39867 / T7901).